A 507-amino-acid polypeptide reads, in one-letter code: ATP synthase subunit alpha, chloroplastic (507 aa).

An ATP-binding site is contributed by 170 to 177 (GDRQTGKT).

The protein belongs to the ATPase alpha/beta chains family. As to quaternary structure, F-type ATPases have 2 components, CF(1) - the catalytic core - and CF(0) - the membrane proton channel. CF(1) has five subunits: alpha(3), beta(3), gamma(1), delta(1), epsilon(1). CF(0) has four main subunits: a, b, b' and c.

The protein localises to the plastid. It localises to the chloroplast thylakoid membrane. The catalysed reaction is ATP + H2O + 4 H(+)(in) = ADP + phosphate + 5 H(+)(out). Its function is as follows. Produces ATP from ADP in the presence of a proton gradient across the membrane. The alpha chain is a regulatory subunit. The chain is ATP synthase subunit alpha, chloroplastic from Amborella trichopoda.